A 284-amino-acid polypeptide reads, in one-letter code: Bifunctional protein FolD (284 aa).

NADP(+)-binding positions include 166-168 (GAS) and Ile232.

It belongs to the tetrahydrofolate dehydrogenase/cyclohydrolase family. Homodimer.

The catalysed reaction is (6R)-5,10-methylene-5,6,7,8-tetrahydrofolate + NADP(+) = (6R)-5,10-methenyltetrahydrofolate + NADPH. The enzyme catalyses (6R)-5,10-methenyltetrahydrofolate + H2O = (6R)-10-formyltetrahydrofolate + H(+). The protein operates within one-carbon metabolism; tetrahydrofolate interconversion. In terms of biological role, catalyzes the oxidation of 5,10-methylenetetrahydrofolate to 5,10-methenyltetrahydrofolate and then the hydrolysis of 5,10-methenyltetrahydrofolate to 10-formyltetrahydrofolate. The chain is Bifunctional protein FolD from Shewanella sp. (strain W3-18-1).